The primary structure comprises 1061 residues: MGKARKHSRGRPSGFVPDYMQAVEPDEFVYSERMNSEASPPLKRRRFGLNGDNNGVSKEVLSLSKMSRSERKNLVHKLKMELQQVRDLSKKIASFSSDTVLLSPYNDHSCSDGPRRPPPENFATFVGSQGKKRPPVRSDKQRNKKGPSRLNVPTSYTVASVMKECETLLNRLWSHKSGWPFRTPVDPVMLNIPDYFNVIKHPMDLGTIRSRLCKGEYSSPLDFAADVRLTFSNSIAYNPPGNQFHTMAQGISKYFESGWKSIEKKIPMSKPPVIPLTSSASLESEIPFEVAPMRKKEAAMNDNKLRVEPAKLVMTDGEKKKLGQDLMALEEDFPQKIADLLREQSGSDGQSGEGEIEIDIEALSDEILFMVRKLLDDYLREKKKSMEKSEPCEMEIVHDSGFSNSPLQPSKGDLQIDEDVDIVGGNDPSVSSHPPLKIEKDAACRNNESSSSSSSSSESGSSSSDSDSCSSSGSETDSIKASKPTSREEKKQPGVGIDKKEDDSNSEKIVVNDSLNELDQLEHTVGEKSTTMDAVVLVPDEETAPPERQISPDSPDKRYRAAFLKNRFADTIMKAREKAFTKGEKGDPEKLRIEREEFEKRLREEKERLQAEAKAAEEARRKAKAEAAEKARREREQEREAARQALQKMEKTVEINEGIRFMEDLQMLRATGTEGDQLPTSMEVMSPKFSEDMLGLGSFKMESNSNPLEHLGLYMKMDEDEDEEEDPPHFSQRKVEDNPFDRSEKQEHSPHRVEGEDQLVSGNEEPVSQEAHDNGDQEDGKPINPNEIERQLENMPEQESGVGDKEEQETEVVDMRKQENEVVDMGVEEVHPLDRSEGRTLSPHRKEREDPRASGNEESVSEKAQDYENQRDEKINQSEREEQLENVLEQESSRDDDTGEQETEVVGVGKELSLDKSEGQTLSPHREEGENQLDCGNEELVSQKTQDNGNQEDEKSINKIEGEEQLANVPEQESRVTEKEEQETGVVDLGEQKSEVVEKGVEENEAVDNGEGVQGTEVSDKGGNETVVDGNGKVETEVVDKAGQKTDLVDQGEEDIDVEID.

Disordered stretches follow at residues 32 to 56 (ERMN…NNGV) and 106 to 152 (NDHS…RLNV). The segment covering 109–118 (SCSDGPRRPP) has biased composition (basic and acidic residues). The Bromo domain occupies 156-262 (YTVASVMKEC…KYFESGWKSI (107 aa)). Residues 304 to 386 (KLRVEPAKLV…DYLREKKKSM (83 aa)) form the NET domain. Disordered stretches follow at residues 443–518 (ACRN…LNEL), 538–558 (VPDE…PDKR), 606–645 (KERL…ARQA), and 710–1033 (HLGL…GNGK). Positions 448–476 (ESSSSSSSSSESGSSSSDSDSCSSSGSET) are enriched in low complexity. Over residues 477 to 506 (DSIKASKPTSREEKKQPGVGIDKKEDDSNS) the composition is skewed to basic and acidic residues. The stretch at 588–658 (PEKLRIEREE…MEKTVEINEG (71 aa)) forms a coiled coil. 5 stretches are compositionally biased toward basic and acidic residues: residues 733 to 755 (RKVE…RVEG), 770 to 792 (EAHD…ERQL), 828 to 852 (EEVH…EDPR), 860 to 883 (VSEK…REEQ), and 912 to 929 (LSLD…REEG). Residues 852 to 893 (RASGNEESVSEKAQDYENQRDEKINQSEREEQLENVLEQESS) adopt a coiled-coil conformation. The segment covering 940-949 (LVSQKTQDNG) has biased composition (polar residues). 2 stretches are compositionally biased toward basic and acidic residues: residues 952 to 962 (EDEKSINKIEG) and 990 to 1002 (GEQK…KGVE).

Interacts with TIP/NAC091. In terms of tissue distribution, widely expressed in all tissues.

The protein resides in the nucleus. In terms of biological role, acts as a negative regulator in plant response to changes in environmental conditions through the control of ABA-regulated gene expression. The protein is Transcription factor GTE10 (GTE10) of Arabidopsis thaliana (Mouse-ear cress).